We begin with the raw amino-acid sequence, 495 residues long: Probable histidine ammonia-lyase (495 aa).

The segment at residues 141–143 is a cross-link (5-imidazolinone (Ala-Gly)); sequence ASG. Serine 142 bears the 2,3-didehydroalanine (Ser) mark.

Belongs to the PAL/histidase family. Contains an active site 4-methylidene-imidazol-5-one (MIO), which is formed autocatalytically by cyclization and dehydration of residues Ala-Ser-Gly.

It localises to the cytoplasm. The enzyme catalyses L-histidine = trans-urocanate + NH4(+). Its pathway is amino-acid degradation; L-histidine degradation into L-glutamate; N-formimidoyl-L-glutamate from L-histidine: step 1/3. The polypeptide is Probable histidine ammonia-lyase (Thermoplasma volcanium (strain ATCC 51530 / DSM 4299 / JCM 9571 / NBRC 15438 / GSS1)).